A 229-amino-acid chain; its full sequence is uncharacterized protein (229 aa).

The 68-residue stretch at 2 to 69 (QRLAKIISNA…KPRLWIYYKP (68 aa)) folds into the S4 RNA-binding domain. Asp-102 (nucleophile) is an active-site residue.

It belongs to the pseudouridine synthase RsuA family.

It catalyses the reaction a uridine in RNA = a pseudouridine in RNA. This is an uncharacterized protein from Rickettsia felis (strain ATCC VR-1525 / URRWXCal2) (Rickettsia azadi).